We begin with the raw amino-acid sequence, 769 residues long: Serine/threonine-protein kinase PLK4 (769 aa).

The 254-residue stretch at 14–267 (YEVQHLLGKG…LEAVLCHPFM (254 aa)) folds into the Protein kinase domain. Residues 20 to 28 (LGKGGFATV) and lysine 43 contribute to the ATP site. Aspartate 138 (proton acceptor) is an active-site residue. Positions 381-498 (EDRISVPPLN…ARFVGLVKSK (118 aa)) constitute a Cryptic POLO box 1 (CPB1) domain. A Cryptic POLO box 2 (CPB2) domain is found at 499 to 602 (TPKVTYFSTL…GRRPITDVQP (104 aa)). Positions 660-739 (PIKRINVPDI…IPNIQLKLKT (80 aa)) constitute a POLO box domain.

The protein belongs to the protein kinase superfamily. Ser/Thr protein kinase family. CDC5/Polo subfamily. As to quaternary structure, homodimer. In terms of processing, ubiquitinated by the SCF(Slimb) ubiquitin ligase complex; leading to its degradation by the proteasome during interphase and regulating centriole number and ensuring the block to centriole reduplication.

It is found in the cytoplasm. It localises to the cytoskeleton. The protein resides in the microtubule organizing center. Its subcellular location is the centrosome. The protein localises to the centriole. It catalyses the reaction L-seryl-[protein] + ATP = O-phospho-L-seryl-[protein] + ADP + H(+). The catalysed reaction is L-threonyl-[protein] + ATP = O-phospho-L-threonyl-[protein] + ADP + H(+). In terms of biological role, serine/threonine-protein kinase that plays a central role in centriole duplication. Able to trigger procentriole formation on the surface of the mother centriole cylinder, using mother centriole as a platform, leading to the recruitment of centriole biogenesis proteins such as sas-6. When overexpressed, it is able to induce centrosome amplification through the simultaneous generation of multiple procentrioles adjoining each parental centriole during S phase. Centrosome amplification following overexpression can initiate tumorigenesis, highlighting the importance of centrosome regulation in cancers. In Drosophila simulans (Fruit fly), this protein is Serine/threonine-protein kinase PLK4 (SAK).